The primary structure comprises 297 residues: 4-hydroxy-tetrahydrodipicolinate synthase (297 aa).

Residue Thr47 participates in pyruvate binding. Catalysis depends on Tyr136, which acts as the Proton donor/acceptor. The active-site Schiff-base intermediate with substrate is the Lys165. Ile206 provides a ligand contact to pyruvate.

This sequence belongs to the DapA family. In terms of assembly, homotetramer; dimer of dimers.

It is found in the cytoplasm. The catalysed reaction is L-aspartate 4-semialdehyde + pyruvate = (2S,4S)-4-hydroxy-2,3,4,5-tetrahydrodipicolinate + H2O + H(+). The protein operates within amino-acid biosynthesis; L-lysine biosynthesis via DAP pathway; (S)-tetrahydrodipicolinate from L-aspartate: step 3/4. In terms of biological role, catalyzes the condensation of (S)-aspartate-beta-semialdehyde [(S)-ASA] and pyruvate to 4-hydroxy-tetrahydrodipicolinate (HTPA). The chain is 4-hydroxy-tetrahydrodipicolinate synthase from Campylobacter concisus (strain 13826).